The following is a 124-amino-acid chain: Cytochrome c2 (124 aa).

Q1 carries the post-translational modification Pyrrolidone carboxylic acid. Heme c-binding residues include C15, C18, H19, and M100.

Post-translationally, binds 1 heme c group covalently per subunit.

It localises to the periplasm. Its function is as follows. Cytochrome c2 is found mainly in purple, non-sulfur, photosynthetic bacteria where it functions as the electron donor to the oxidized bacteriochlorophyll in the photophosphorylation pathway. However, it may also have a role in the respiratory chain and is found in some non-photosynthetic bacteria. This chain is Cytochrome c2 (cycA), found in Cereibacter sphaeroides (Rhodobacter sphaeroides).